Reading from the N-terminus, the 284-residue chain is Acetylglutamate kinase (284 aa).

Residues glycine 66 to glycine 67, arginine 88, and asparagine 179 contribute to the substrate site.

The protein belongs to the acetylglutamate kinase family. ArgB subfamily.

It localises to the cytoplasm. It catalyses the reaction N-acetyl-L-glutamate + ATP = N-acetyl-L-glutamyl 5-phosphate + ADP. It functions in the pathway amino-acid biosynthesis; L-arginine biosynthesis; N(2)-acetyl-L-ornithine from L-glutamate: step 2/4. Functionally, catalyzes the ATP-dependent phosphorylation of N-acetyl-L-glutamate. The sequence is that of Acetylglutamate kinase from Actinobacillus pleuropneumoniae serotype 7 (strain AP76).